The chain runs to 72 residues: Small ribosomal subunit protein eS17 (72 aa).

This sequence belongs to the eukaryotic ribosomal protein eS17 family.

In Nanoarchaeum equitans (strain Kin4-M), this protein is Small ribosomal subunit protein eS17.